We begin with the raw amino-acid sequence, 374 residues long: Heat stress transcription factor A-8 (374 aa).

The DNA-binding element occupies 17–112; it reads VAPFLRKCYD…LLKNVIRRKN (96 aa). Positions 126 to 192 are hydrophobic repeat HR-A/B; that stretch reads TTYAQEKSGL…EMLSFLVMVM (67 aa). The AHA1 signature appears at 285–294; that stretch reads DGAWEKLLLL. Positions 298-303 match the Nuclear localization signal motif; that stretch reads RKKTKK. Positions 330–339 match the AHA2 motif; sequence KSYMLKLISE. A Nuclear export signal motif is present at residues 363-370; the sequence is LTEQMELL.

It belongs to the HSF family. Class A subfamily. Homotrimer. In terms of processing, exhibits temperature-dependent phosphorylation.

It is found in the cytoplasm. It localises to the nucleus. Transcriptional activator that specifically binds DNA sequence 5'-AGAAnnTTCT-3' known as heat shock promoter elements (HSE). The chain is Heat stress transcription factor A-8 (HSFA8) from Arabidopsis thaliana (Mouse-ear cress).